The chain runs to 113 residues: Immunoglobulin lambda variable 2-23 (113 aa).

The signal sequence occupies residues 1 to 19 (MAWALLLLTLLTQDTGSWA). Gln20 is modified (pyrrolidone carboxylic acid). A framework-1 region spans residues 20–44 (QSALTQPASVSGSPGQSITISCTGT). The 94-residue stretch at 20–113 (QSALTQPASV…EADYYCCSYA (94 aa)) folds into the Ig-like domain. Cys41 and Cys109 form a disulfide bridge. The tract at residues 45–53 (SSDVGSYNL) is complementarity-determining-1. The tract at residues 54–70 (VSWYQQHPGKAPKLMIY) is framework-2. The tract at residues 71-73 (EGS) is complementarity-determining-2. The segment at 73–92 (SKRPSGVSNRFSGSKSGNTA) is disordered. Residues 74–109 (KRPSGVSNRFSGSKSGNTASLTISGLQAEDEADYYC) are framework-3. Polar residues predominate over residues 78–92 (GVSNRFSGSKSGNTA). Residues 110-113 (CSYA) form a complementarity-determining-3 region.

In terms of assembly, immunoglobulins are composed of two identical heavy chains and two identical light chains; disulfide-linked.

The protein localises to the secreted. Its subcellular location is the cell membrane. V region of the variable domain of immunoglobulin light chains that participates in the antigen recognition. Immunoglobulins, also known as antibodies, are membrane-bound or secreted glycoproteins produced by B lymphocytes. In the recognition phase of humoral immunity, the membrane-bound immunoglobulins serve as receptors which, upon binding of a specific antigen, trigger the clonal expansion and differentiation of B lymphocytes into immunoglobulins-secreting plasma cells. Secreted immunoglobulins mediate the effector phase of humoral immunity, which results in the elimination of bound antigens. The antigen binding site is formed by the variable domain of one heavy chain, together with that of its associated light chain. Thus, each immunoglobulin has two antigen binding sites with remarkable affinity for a particular antigen. The variable domains are assembled by a process called V-(D)-J rearrangement and can then be subjected to somatic hypermutations which, after exposure to antigen and selection, allow affinity maturation for a particular antigen. The chain is Immunoglobulin lambda variable 2-23 from Homo sapiens (Human).